The primary structure comprises 123 residues: Large ribosomal subunit protein uL29 (123 aa).

The protein belongs to the universal ribosomal protein uL29 family. As to quaternary structure, component of the large ribosomal subunit.

Its subcellular location is the cytoplasm. Component of the large ribosomal subunit. The ribosome is a large ribonucleoprotein complex responsible for the synthesis of proteins in the cell. The polypeptide is Large ribosomal subunit protein uL29 (rpl35) (Platichthys flesus (European flounder)).